We begin with the raw amino-acid sequence, 374 residues long: WD repeat-containing protein JIP5 (374 aa).

WD repeat units lie at residues 21–61 (AYTS…GETS), 68–107 (PSKR…IQLS), 120–158 (AHEC…SIRT), 161–200 (QHFD…STPL), 205–244 (DQED…ADSV), 249–287 (GHPA…FLGV), and 290–330 (THEE…EDSD). A compositionally biased stretch (acidic residues) spans 325–344 (LFEDSDEDDEMEEDEPDSDE). Positions 325-374 (LFEDSDEDDEMEEDEPDSDEEKSKKKKKDNGMKDMSRGQAENDGSFFADL) are disordered.

This sequence belongs to the WD repeat WDR55 family.

It is found in the nucleus. Its subcellular location is the nucleolus. This is WD repeat-containing protein JIP5 (JIP5) from Cryptococcus neoformans var. neoformans serotype D (strain B-3501A) (Filobasidiella neoformans).